The following is a 2363-amino-acid chain: Spectrin beta chain, non-erythrocytic 1 (2363 aa).

Thr2 carries the N-acetylthreonine modification. The tract at residues 2 to 275 (TTTVATDYDN…IITYVVTYYH (274 aa)) is actin-binding. Ile14 and Ser36 each carry phosphoserine. 2 Calponin-homology (CH) domains span residues 54–158 (AVQK…LRFQ) and 173–278 (KSAK…HYFS). An N6-acetyllysine modification is found at Lys90. Ser228 carries the post-translational modification Phosphoserine. Spectrin repeat units lie at residues 303–411 (MIEK…LALR), 423–525 (LARR…QRLE), 530–636 (LQKI…RLEE), 639–742 (RLWK…RLEE), 745–847 (LLHQ…ALQD), 850–952 (ALYK…DALL), 957–1060 (IQNY…SLGE), 1063–1166 (KLQQ…NLLS), 1170–1259 (AYQQ…RHRK), 1276–1376 (DLQK…AQRL), 1381–1482 (KAEL…HNLL), 1486–1590 (EIHQ…RLEE), 1592–1696 (HKAQ…KLDE), 1698–1801 (HRLF…TQIL), and 1805–1907 (YELH…RVRL). A phosphoserine mark is found at Ser817, Ser903, Ser1057, Ser1076, Ser1079, and Ser1237. Residues Ser1388, Ser1447, and Ser1557 each carry the phosphoserine modification. The interval 1563–2093 (IRQRLADLKQ…LLEVRRQQEE (531 aa)) is interaction with ANK2. Tyr1805 is subject to Phosphotyrosine. Lys1815, Lys1913, and Lys1989 each carry N6-acetyllysine. 2 Spectrin repeats span residues 1914–2014 (FRFF…EWLR) and 2018–2097 (EVHQ…EERK). The interval 2089–2193 (RQQEEEERKR…AATLPARTLE (105 aa)) is disordered. Phosphoserine is present on residues Ser2102, Ser2127, and Ser2137. The span at 2115–2130 (SQQWDTSKGDQVSQNG) shows a compositional bias: polar residues. Thr2146 carries the phosphothreonine modification. The residue at position 2147 (Ser2147) is a Phosphoserine. Residues 2148 to 2176 (EMVNGAAEQRTSSKESSPVPSPTLDRKAK) are mediates interaction with CAMSAP1. At Thr2158 the chain carries Phosphothreonine. 5 positions are modified to phosphoserine: Ser2159, Ser2160, Ser2163, Ser2164, and Ser2168. Thr2170 is modified (phosphothreonine). Ser2183 carries the phosphoserine modification. Thr2186 and Thr2194 each carry phosphothreonine. Residues 2196 to 2306 (AAQMEGFLNR…WIQAISSAIS (111 aa)) form the PH domain. A disordered region spans residues 2308–2363 (DKHDTSASTQSTPASSRAQTLPTSVVTITSESSPGKREKDKEKDKEKRFSLFGKKK). 2 positions are modified to phosphoserine: Ser2313 and Ser2318. The span at 2313–2327 (SASTQSTPASSRAQT) shows a compositional bias: low complexity. Thr2319 carries the phosphothreonine modification. Ser2323 carries an O-linked (GlcNAc) serine glycan. At Thr2327 the chain carries Phosphothreonine. Residues 2328-2340 (LPTSVVTITSESS) show a composition bias toward polar residues. Ser2339 and Ser2340 each carry phosphoserine. Residues 2341–2356 (PGKREKDKEKDKEKRF) show a composition bias toward basic and acidic residues.

Belongs to the spectrin family. As to quaternary structure, interacts with ANK2. Interacts with CPNE4 (via VWFA domain). Like erythrocyte spectrin, the spectrin-like proteins are capable to form dimers which can further associate to tetramers. Interacts with CAMSAP1. Can form heterodimers with SPTAN1. In terms of tissue distribution, isoform 2 is present in brain, heart, kidney and liver (at protein level).

It localises to the cytoplasm. The protein localises to the cytoskeleton. The protein resides in the endomembrane system. It is found in the myofibril. Its subcellular location is the sarcomere. It localises to the m line. The protein localises to the cytosol. The protein resides in the cell membrane. Fodrin, which seems to be involved in secretion, interacts with calmodulin in a calcium-dependent manner and is thus candidate for the calcium-dependent movement of the cytoskeleton at the membrane. Plays a critical role in central nervous system development and function. The polypeptide is Spectrin beta chain, non-erythrocytic 1 (Sptbn1) (Mus musculus (Mouse)).